Reading from the N-terminus, the 217-residue chain is Adapter protein MecA (217 aa).

Belongs to the MecA family. In terms of assembly, homodimer.

Enables the recognition and targeting of unfolded and aggregated proteins to the ClpC protease or to other proteins involved in proteolysis. The chain is Adapter protein MecA from Listeria monocytogenes serotype 4b (strain CLIP80459).